We begin with the raw amino-acid sequence, 122 residues long: Large ribosomal subunit protein uL14c (122 aa).

It belongs to the universal ribosomal protein uL14 family. In terms of assembly, part of the 50S ribosomal subunit.

The protein localises to the plastid. It is found in the chloroplast. Functionally, binds to 23S rRNA. This Liriodendron tulipifera (Tuliptree) protein is Large ribosomal subunit protein uL14c.